A 96-amino-acid polypeptide reads, in one-letter code: Protein RnfH (96 aa).

Belongs to the UPF0125 (RnfH) family.

The sequence is that of Protein RnfH from Escherichia coli O139:H28 (strain E24377A / ETEC).